The following is a 318-amino-acid chain: Beta-ketoacyl-[acyl-carrier-protein] synthase III (318 aa).

Catalysis depends on residues C112 and H245. The tract at residues 246-250 is ACP-binding; that stretch reads QANLR. Residue N275 is part of the active site.

The protein belongs to the thiolase-like superfamily. FabH family. In terms of assembly, homodimer.

The protein resides in the cytoplasm. It carries out the reaction malonyl-[ACP] + acetyl-CoA + H(+) = 3-oxobutanoyl-[ACP] + CO2 + CoA. The protein operates within lipid metabolism; fatty acid biosynthesis. Its function is as follows. Catalyzes the condensation reaction of fatty acid synthesis by the addition to an acyl acceptor of two carbons from malonyl-ACP. Catalyzes the first condensation reaction which initiates fatty acid synthesis and may therefore play a role in governing the total rate of fatty acid production. Possesses both acetoacetyl-ACP synthase and acetyl transacylase activities. Its substrate specificity determines the biosynthesis of branched-chain and/or straight-chain of fatty acids. The sequence is that of Beta-ketoacyl-[acyl-carrier-protein] synthase III from Blochmanniella floridana.